The chain runs to 560 residues: Mannosyl-oligosaccharide 1,2-alpha-mannosidase MNS1 (560 aa).

The Cytoplasmic segment spans residues 1–27 (MARSRSISGYGIWKYLNPAYYLRRPRR). Residues 28 to 47 (LALLFIVFVSVSMLVWDRIN) form a helical; Signal-anchor for type II membrane protein membrane-spanning segment. Residues 47 to 80 (NLAREHEVEVFKLNEEVSRLEQMLEELNGGVGNK) adopt a coiled-coil conformation. Residues 48-560 (LAREHEVEVF…QRKFGHQINV (513 aa)) are Lumenal-facing. The active-site Proton donor is Glu179. Asp312 is an active-site residue. Residue Asn326 is glycosylated (N-linked (GlcNAc...) asparagine). Cys377 and Cys409 form a disulfide bridge. Residue Glu423 is the Proton donor of the active site. Glu445 is a catalytic residue. The N-linked (GlcNAc...) asparagine glycan is linked to Asn459. Thr529 is a Ca(2+) binding site.

It belongs to the glycosyl hydrolase 47 family. Requires Ca(2+) as cofactor. Mn(2+) serves as cofactor. Mg(2+) is required as a cofactor. In terms of tissue distribution, expressed in flowers, siliques, stems, leaves, roots, pollen grains, shoot apical meristems, hypocotyls and upper region of the root.

It localises to the golgi apparatus membrane. The enzyme catalyses N(4)-(alpha-D-Man-(1-&gt;2)-alpha-D-Man-(1-&gt;2)-alpha-D-Man-(1-&gt;3)-[alpha-D-Man-(1-&gt;2)-alpha-D-Man-(1-&gt;3)-[alpha-D-Man-(1-&gt;2)-alpha-D-Man-(1-&gt;6)]-alpha-D-Man-(1-&gt;6)]-beta-D-Man-(1-&gt;4)-beta-D-GlcNAc-(1-&gt;4)-beta-D-GlcNAc)-L-asparaginyl-[protein] (N-glucan mannose isomer 9A1,2,3B1,2,3) + 4 H2O = N(4)-(alpha-D-Man-(1-&gt;3)-[alpha-D-Man-(1-&gt;3)-[alpha-D-Man-(1-&gt;6)]-alpha-D-Man-(1-&gt;6)]-beta-D-Man-(1-&gt;4)-beta-D-GlcNAc-(1-&gt;4)-beta-D-GlcNAc)-L-asparaginyl-[protein] (N-glucan mannose isomer 5A1,2) + 4 beta-D-mannose. It catalyses the reaction N(4)-(alpha-D-Man-(1-&gt;2)-alpha-D-Man-(1-&gt;2)-alpha-D-Man-(1-&gt;3)-[alpha-D-Man-(1-&gt;3)-[alpha-D-Man-(1-&gt;2)-alpha-D-Man-(1-&gt;6)]-alpha-D-Man-(1-&gt;6)]-beta-D-Man-(1-&gt;4)-beta-D-GlcNAc-(1-&gt;4)-beta-D-GlcNAc)-L-asparaginyl-[protein] (N-glucan mannose isomer 8A1,2,3B1,3) + 3 H2O = N(4)-(alpha-D-Man-(1-&gt;3)-[alpha-D-Man-(1-&gt;3)-[alpha-D-Man-(1-&gt;6)]-alpha-D-Man-(1-&gt;6)]-beta-D-Man-(1-&gt;4)-beta-D-GlcNAc-(1-&gt;4)-beta-D-GlcNAc)-L-asparaginyl-[protein] (N-glucan mannose isomer 5A1,2) + 3 beta-D-mannose. It carries out the reaction N(4)-(alpha-D-Man-(1-&gt;2)-alpha-D-Man-(1-&gt;2)-alpha-D-Man-(1-&gt;3)-[alpha-D-Man-(1-&gt;2)-alpha-D-Man-(1-&gt;3)-[alpha-D-Man-(1-&gt;2)-alpha-D-Man-(1-&gt;6)]-alpha-D-Man-(1-&gt;6)]-beta-D-Man-(1-&gt;4)-beta-D-GlcNAc-(1-&gt;4)-beta-D-GlcNAc)-L-asparaginyl-[protein] (N-glucan mannose isomer 9A1,2,3B1,2,3) + H2O = N(4)-(alpha-D-Man-(1-&gt;2)-alpha-D-Man-(1-&gt;2)-alpha-D-Man-(1-&gt;3)-[alpha-D-Man-(1-&gt;3)-[alpha-D-Man-(1-&gt;2)-alpha-D-Man-(1-&gt;6)]-alpha-D-Man-(1-&gt;6)]-beta-D-Man-(1-&gt;4)-beta-D-GlcNAc-(1-&gt;4)-beta-D-GlcNAc)-L-asparaginyl-[protein] (N-glucan mannose isomer 8A1,2,3B1,3) + beta-D-mannose. It participates in protein modification; protein glycosylation. With respect to regulation, inhibited by kifunensine and 1-deoxymannojirimycin, but not by swainsonine. In terms of biological role, class I alpha-mannosidase essential for early N-glycan processing. Progressively trims alpha-1,2-linked mannose residues. Produces Man(5)GlcNAc(2) from Man(8)GlcNAc(2), but only Man(6)GlcNAc(2) from Man(9)GlcNAc(2). Has difficulty acting on the terminal mannose of the b-branch. Involved in root development and cell wall biosynthesis. The chain is Mannosyl-oligosaccharide 1,2-alpha-mannosidase MNS1 (MNS1) from Arabidopsis thaliana (Mouse-ear cress).